A 518-amino-acid polypeptide reads, in one-letter code: Membrane-bound lytic murein transglycosylase F (518 aa).

The signal sequence occupies residues 1-21; it reads MKKLKINYLFIGILALLLAVA. The interval 22–269 is non-LT domain; that stretch reads LWPSIPWFGK…RIEEKYLGHG (248 aa). The tract at residues 270-518 is LT domain; it reads DDFDYVDTRT…SRKGSEEKQN (249 aa). Glutamate 314 is a catalytic residue.

This sequence in the N-terminal section; belongs to the bacterial solute-binding protein 3 family. It in the C-terminal section; belongs to the transglycosylase Slt family.

Its subcellular location is the cell outer membrane. It catalyses the reaction Exolytic cleavage of the (1-&gt;4)-beta-glycosidic linkage between N-acetylmuramic acid (MurNAc) and N-acetylglucosamine (GlcNAc) residues in peptidoglycan, from either the reducing or the non-reducing ends of the peptidoglycan chains, with concomitant formation of a 1,6-anhydrobond in the MurNAc residue.. Murein-degrading enzyme that degrades murein glycan strands and insoluble, high-molecular weight murein sacculi, with the concomitant formation of a 1,6-anhydromuramoyl product. Lytic transglycosylases (LTs) play an integral role in the metabolism of the peptidoglycan (PG) sacculus. Their lytic action creates space within the PG sacculus to allow for its expansion as well as for the insertion of various structures such as secretion systems and flagella. In Shigella dysenteriae serotype 1 (strain Sd197), this protein is Membrane-bound lytic murein transglycosylase F.